We begin with the raw amino-acid sequence, 166 residues long: Ribosome biogenesis regulatory protein homolog (166 aa).

A phosphoserine mark is found at Ser34 and Ser64. The disordered stretch occupies residues 144–166 (KEKKLTSKQVRNTSKKIKRSRRH). Basic residues predominate over residues 156-166 (TSKKIKRSRRH).

It belongs to the RRS1 family. As to quaternary structure, component of a hexameric 5S RNP precursor complex, composed of 5S RNA, rrs1, rpf2, rpl5a/rpl5b, rpl11a/rpl11b and syo1; this complex acts as a precursor for ribosome assembly. Interacts with sad1.

It is found in the nucleus. The protein resides in the nucleolus. In terms of biological role, involved in ribosomal large subunit assembly. The sequence is that of Ribosome biogenesis regulatory protein homolog from Schizosaccharomyces pombe (strain 972 / ATCC 24843) (Fission yeast).